The sequence spans 662 residues: MNQFKVISKFNPTGDQPKAIKSIAKGIEKGEKFQTLIGVTGSGKTFTMANIIEKVQKPTLVLAHNKTLAAQLCSEFREFFPNNAVEYFVSYYDYYQPEAYVAQSDTYIEKDASINDEIDKLRHSATSALFERKDVIIVASVSCIYGLGNPEEYKKLTISLREGMEKDRDEIIKKLVEIQYERNDIDFSRGTFRVKGDVLDIFPASSSSKAVRIEFFGDEIDRIKEFDVLTGETITKLKHISIFPASHFATSKDRLEIAIKNIEEELEERVKELVSQDKILEAQRLKQRTNFDIEMMREVGYCTGIENYSRVLDGRAKGTPPQTLLDYFPQDFLLFIDESHVTLPQVKAMQAGDKSRKDSLVEYGFRLPCAYDNRPLTFKEFENKLNQVVFVSATPAKYELEYSANTAEQVIRPTGLLDPEIIVKPVKGQIDDLYTSIQETIKRGFRILVTTLTKKMAEDLTDYLKEMGVKTRYLHSDIDTIERMKIIHDLRKGEFHVLVGINLLREGLDIPEVALVTILDADKEGFLRSETSLIQTVGRAARNSESKVIMYGDVITKSMEKTIRETNRRRKIQMEHNEKHGIVPKTIIKDIREVIQISDIAEERKEYDNLNEALKSYNNDIDKLIEKYEEEMKEAAQNLQFEKAAHLRDVIYKLKRDKETEL.

The Helicase ATP-binding domain maps to 25 to 182; it reads KGIEKGEKFQ…KKLVEIQYER (158 aa). ATP is bound at residue 38–45; it reads GVTGSGKT. Positions 91–114 match the Beta-hairpin motif; sequence YYDYYQPEAYVAQSDTYIEKDASI. The 167-residue stretch at 429 to 595 folds into the Helicase C-terminal domain; sequence QIDDLYTSIQ…TIIKDIREVI (167 aa). The 36-residue stretch at 622–657 folds into the UVR domain; the sequence is DKLIEKYEEEMKEAAQNLQFEKAAHLRDVIYKLKRD.

This sequence belongs to the UvrB family. As to quaternary structure, forms a heterotetramer with UvrA during the search for lesions. Interacts with UvrC in an incision complex.

The protein resides in the cytoplasm. In terms of biological role, the UvrABC repair system catalyzes the recognition and processing of DNA lesions. A damage recognition complex composed of 2 UvrA and 2 UvrB subunits scans DNA for abnormalities. Upon binding of the UvrA(2)B(2) complex to a putative damaged site, the DNA wraps around one UvrB monomer. DNA wrap is dependent on ATP binding by UvrB and probably causes local melting of the DNA helix, facilitating insertion of UvrB beta-hairpin between the DNA strands. Then UvrB probes one DNA strand for the presence of a lesion. If a lesion is found the UvrA subunits dissociate and the UvrB-DNA preincision complex is formed. This complex is subsequently bound by UvrC and the second UvrB is released. If no lesion is found, the DNA wraps around the other UvrB subunit that will check the other stand for damage. The sequence is that of UvrABC system protein B from Clostridium botulinum (strain Loch Maree / Type A3).